Consider the following 84-residue polypeptide: MANIVSNEKTYRHTQKVRKENHAKMSKLRTIVKKTRSSNEQAQLNEAYKVIDTTASKGVIHKNKANRLKSRTAKAFKANLQVVA.

Positions Met1–Met25 are disordered.

The protein belongs to the bacterial ribosomal protein bS20 family.

Its function is as follows. Binds directly to 16S ribosomal RNA. In Ureaplasma urealyticum serovar 10 (strain ATCC 33699 / Western), this protein is Small ribosomal subunit protein bS20.